The following is a 376-amino-acid chain: Ribonucleoside-diphosphate reductase subunit beta (376 aa).

Positions 85, 116, and 119 each coordinate Fe cation. Y123 is a catalytic residue. Fe cation-binding residues include E205, E239, and H242.

The protein belongs to the ribonucleoside diphosphate reductase small chain family. Tetramer of two alpha and two beta subunits. It depends on Fe cation as a cofactor.

The enzyme catalyses a 2'-deoxyribonucleoside 5'-diphosphate + [thioredoxin]-disulfide + H2O = a ribonucleoside 5'-diphosphate + [thioredoxin]-dithiol. Functionally, provides the precursors necessary for DNA synthesis. Catalyzes the biosynthesis of deoxyribonucleotides from the corresponding ribonucleotides. The polypeptide is Ribonucleoside-diphosphate reductase subunit beta (nrdB) (Buchnera aphidicola subsp. Schizaphis graminum (strain Sg)).